The primary structure comprises 474 residues: 3-isopropylmalate dehydratase large subunit (474 aa).

Cysteine 350, cysteine 411, and cysteine 414 together coordinate [4Fe-4S] cluster.

It belongs to the aconitase/IPM isomerase family. LeuC type 1 subfamily. Heterodimer of LeuC and LeuD. [4Fe-4S] cluster is required as a cofactor.

The enzyme catalyses (2R,3S)-3-isopropylmalate = (2S)-2-isopropylmalate. It participates in amino-acid biosynthesis; L-leucine biosynthesis; L-leucine from 3-methyl-2-oxobutanoate: step 2/4. Functionally, catalyzes the isomerization between 2-isopropylmalate and 3-isopropylmalate, via the formation of 2-isopropylmaleate. This chain is 3-isopropylmalate dehydratase large subunit, found in Hydrogenovibrio crunogenus (strain DSM 25203 / XCL-2) (Thiomicrospira crunogena).